We begin with the raw amino-acid sequence, 365 residues long: Isoflavone 4'-O-methyltransferase (365 aa).

Residues 207 to 210 (VAGG), Asp231, 231 to 232 (DQ), 251 to 252 (DM), and Lys265 contribute to the S-adenosyl-L-methionine site. Residue His269 is the Proton acceptor of the active site.

Belongs to the class I-like SAM-binding methyltransferase superfamily. Cation-independent O-methyltransferase family. COMT subfamily.

It catalyses the reaction a 4'-hydroxyisoflavone + S-adenosyl-L-methionine = a 4'-methoxyisoflavone + S-adenosyl-L-homocysteine + H(+). The enzyme catalyses (2R,3S)-2,4',7-trihydroxyisoflavanone + S-adenosyl-L-methionine = (2R,3S)-2,7-dihydroxy-4'-methoxyisoflavanone + S-adenosyl-L-homocysteine + H(+). In terms of biological role, 2-hydroxyisoflavanone 4'-O-methyltransferase involved in the biosynthesis of formononetin. Can use 2,7,4'-trihydroxyisoflavanone as substrate, but not daidzein. The polypeptide is Isoflavone 4'-O-methyltransferase (HI4'OMT) (Lotus japonicus (Lotus corniculatus var. japonicus)).